Consider the following 426-residue polypeptide: Glutamate-1-semialdehyde 2,1-aminomutase (426 aa).

At Lys265 the chain carries N6-(pyridoxal phosphate)lysine.

Belongs to the class-III pyridoxal-phosphate-dependent aminotransferase family. HemL subfamily. As to quaternary structure, homodimer. Pyridoxal 5'-phosphate is required as a cofactor.

It is found in the cytoplasm. The catalysed reaction is (S)-4-amino-5-oxopentanoate = 5-aminolevulinate. Its pathway is porphyrin-containing compound metabolism; protoporphyrin-IX biosynthesis; 5-aminolevulinate from L-glutamyl-tRNA(Glu): step 2/2. In Actinobacillus pleuropneumoniae serotype 5b (strain L20), this protein is Glutamate-1-semialdehyde 2,1-aminomutase.